A 90-amino-acid polypeptide reads, in one-letter code: Small ribosomal subunit protein uS17 (90 aa).

This sequence belongs to the universal ribosomal protein uS17 family. Part of the 30S ribosomal subunit.

One of the primary rRNA binding proteins, it binds specifically to the 5'-end of 16S ribosomal RNA. This is Small ribosomal subunit protein uS17 from Treponema denticola (strain ATCC 35405 / DSM 14222 / CIP 103919 / JCM 8153 / KCTC 15104).